The sequence spans 552 residues: Putative transport protein HAPS_0158 (552 aa).

The next 5 helical transmembrane spans lie at 4-24, 28-48, 65-85, 95-115, and 157-177; these read IALTVSLLSLVAVIGLWIGHI, GVSLGIGGVLFGGILVSHFMT, FGLILFVYTIGIQVGPGFFAS, AFAVMIVGISGILVILLHKIF, and MGYAIAYPFGIIGILLAMWLI. 2 RCK C-terminal domains span residues 193-275 and 277-360; these read DSAT…ILGE and VNVS…IIGN. The next 6 helical transmembrane spans lie at 370-390, 393-413, 438-458, 463-483, 492-512, and 532-552; these read MLPIFIGVGLGVLLGSIPIYL, FPVALKLGLAGGPLVVALILA, IVLFLAVVGWKAGGNFLNTLL, LAWIGYGAIITFVPLIVTGLV, YLSLCGLLAGSMTDPPALAFA, and LVMFCRIILPQILAILLWVAG.

This sequence belongs to the AAE transporter (TC 2.A.81) family. YidE subfamily.

The protein localises to the cell membrane. In Glaesserella parasuis serovar 5 (strain SH0165) (Haemophilus parasuis), this protein is Putative transport protein HAPS_0158.